Here is a 388-residue protein sequence, read N- to C-terminus: Succinate--CoA ligase [ADP-forming] subunit beta (388 aa).

In terms of domain architecture, ATP-grasp spans 9-244; it reads KQLFAEYGLP…PSQEDEREAH (236 aa). ATP is bound by residues K46, 53–55, E99, T102, and E107; that span reads GRG. The Mg(2+) site is built by N199 and D213. Residues N264 and 321–323 contribute to the substrate site; that span reads GIV.

This sequence belongs to the succinate/malate CoA ligase beta subunit family. As to quaternary structure, heterotetramer of two alpha and two beta subunits. Mg(2+) is required as a cofactor.

The enzyme catalyses succinate + ATP + CoA = succinyl-CoA + ADP + phosphate. It carries out the reaction GTP + succinate + CoA = succinyl-CoA + GDP + phosphate. Its pathway is carbohydrate metabolism; tricarboxylic acid cycle; succinate from succinyl-CoA (ligase route): step 1/1. Succinyl-CoA synthetase functions in the citric acid cycle (TCA), coupling the hydrolysis of succinyl-CoA to the synthesis of either ATP or GTP and thus represents the only step of substrate-level phosphorylation in the TCA. The beta subunit provides nucleotide specificity of the enzyme and binds the substrate succinate, while the binding sites for coenzyme A and phosphate are found in the alpha subunit. The polypeptide is Succinate--CoA ligase [ADP-forming] subunit beta (Colwellia psychrerythraea (strain 34H / ATCC BAA-681) (Vibrio psychroerythus)).